A 584-amino-acid chain; its full sequence is Isopropyl malate synthase htyA (584 aa).

Residues 39–317 enclose the Pyruvate carboxyltransferase domain; that stretch reads PIWLSTDLRD…ETGLDFSNLP (279 aa).

The protein belongs to the alpha-IPM synthase/homocitrate synthase family. LeuA type 2 subfamily.

The catalysed reaction is 3-methyl-2-oxobutanoate + acetyl-CoA + H2O = (2S)-2-isopropylmalate + CoA + H(+). It participates in antifungal biosynthesis. Functionally, isopropyl malate synthase; part of the gene cluster that mediates the de novo generation of L-homotyrosine from acetyl-CoA and 4-hydroxyphenyl-pyruvate. L-homotyrosine is a building block of echinocandin B, a fungal lipidated cyclic hexapeptide that acts as an antifungal agent. L-homotyrosine 4-hydroxyphenyl-pyruvate first undergoes an aldol-type condensation by htyA with the C-2 of acetyl-CoA followed by the release of CoA to form 2-(4-hydroxybenzyl)-malate. This is followed by isomerization of 2-(4-hydroxy-benzyl)-malate to 3-(4-hydroxybenzyl)-malate by htyD. Thereafter, 3-(4-hydroxybenzyl)-malate undergoes decarboxylation and oxidation to form 2-oxo-4-(4-hydroxybenzyl)butanoic acid, coupled to reduction of NAD(+) to NADH by htyC. The product then undergoes transamination catalyzed by htyB to form L-homotyrosine. The polypeptide is Isopropyl malate synthase htyA (Aspergillus rugulosus (Emericella rugulosa)).